A 203-amino-acid polypeptide reads, in one-letter code: Glycerol-3-phosphate acyltransferase (203 aa).

5 consecutive transmembrane segments (helical) span residues 2–22, 54–74, 80–100, 114–134, and 153–173; these read LATL…AILV, CLVL…AYFL, ALGL…FFGF, LPIG…MVAI, and TWLI…LIIF.

This sequence belongs to the PlsY family. As to quaternary structure, probably interacts with PlsX.

The protein resides in the cell inner membrane. It carries out the reaction an acyl phosphate + sn-glycerol 3-phosphate = a 1-acyl-sn-glycero-3-phosphate + phosphate. Its pathway is lipid metabolism; phospholipid metabolism. Its function is as follows. Catalyzes the transfer of an acyl group from acyl-phosphate (acyl-PO(4)) to glycerol-3-phosphate (G3P) to form lysophosphatidic acid (LPA). This enzyme utilizes acyl-phosphate as fatty acyl donor, but not acyl-CoA or acyl-ACP. The protein is Glycerol-3-phosphate acyltransferase of Pseudoalteromonas translucida (strain TAC 125).